The sequence spans 548 residues: Acetolactate synthase isozyme 2 large subunit (548 aa).

Residue glutamate 47 participates in thiamine diphosphate binding. FAD-binding positions include arginine 149, 251–272 (HGTK…VGAR), and 294–313 (DIDP…LQGD). Residues 377–457 (QHQMWAAQHI…LKIVLLDNQR (81 aa)) are thiamine pyrophosphate binding. Aspartate 428 and asparagine 455 together coordinate Mg(2+).

The protein belongs to the TPP enzyme family. Tetramer of two large (IlvG) and two small (IlvM) chains. FAD serves as cofactor. It depends on Mg(2+) as a cofactor. Requires thiamine diphosphate as cofactor.

The catalysed reaction is 2 pyruvate + H(+) = (2S)-2-acetolactate + CO2. Its pathway is amino-acid biosynthesis; L-isoleucine biosynthesis; L-isoleucine from 2-oxobutanoate: step 1/4. It participates in amino-acid biosynthesis; L-valine biosynthesis; L-valine from pyruvate: step 1/4. With respect to regulation, inhibited by the herbicides chlorimuron ethyl, chlorsulfuron and imazapyr. Catalyzes the first step in the biosynthesis of branched-chain amino acids. This chain is Acetolactate synthase isozyme 2 large subunit (ilvG), found in Escherichia coli (strain K12).